A 379-amino-acid chain; its full sequence is (R)-2-hydroxyglutaryl-CoA dehydratase, subunit beta (379 aa).

This sequence belongs to the FldB/FldC dehydratase alpha/beta subunit family. In terms of assembly, the (R)-2-hydroxyglutaryl-CoA dehydratase enzyme system is a heterodimer composed of an alpha subunit (HgdA) and a beta subunit (HgdB). [4Fe-4S] cluster serves as cofactor. FMN is required as a cofactor. Requires Mg(2+) as cofactor.

It is found in the cytoplasm. The catalysed reaction is (R)-2-hydroxyglutaryl-CoA = (2E)-glutaconyl-CoA + H2O. Its pathway is amino-acid degradation; L-glutamate degradation via hydroxyglutarate pathway; crotonoyl-CoA from L-glutamate: step 4/5. With respect to regulation, activated by the HgdC. Reversibly inactivated by oxidants such as 2-nitrophenol, 3-nitrophenol, 4-nitrophenol, 4-nitrobenzoate, carbonyl cyanide 4-(trifluoromethoxy)phenylhydrazone (FCCP) and chloramphenicol. Irreversibly inactivated by oxidants such as hydroxylamine and nitrite. In terms of biological role, involved in the fermentation of L-glutamate via the hydroxyglutarate pathway. Catalyzes the reversible syn-elimination of water from (R)-2-hydroxyglutaryl-CoA to yield (E)-glutaconyl-CoA. The dehydration mechanism involves a transient one electron reduction of the thioester from (R)-2-hydroxyglutaryl-CoA, generating a ketyl radical. Prior to (E)-glutaconyl-CoA formation, the ketyl radical is subsequently reoxidized by electron transfer back to the HgdA-HgdB complex (CompD) to avoid change in oxidation state of the substrate. The appropriate redox state of dehydratase HgdA-HgdB complex (CompD) is maintained by HgdC (CompA) via hydrolysis of ATP and ATP-dependent electron transfer. Since the electron is recycled, the dehydratase is able to perform several turnovers with only catalytic amounts of ATP and substoichiometric amounts of HgdC (CompA). This is (R)-2-hydroxyglutaryl-CoA dehydratase, subunit beta from Acidaminococcus fermentans (strain ATCC 25085 / DSM 20731 / CCUG 9996 / CIP 106432 / VR4).